Consider the following 270-residue polypeptide: Ethanolamine ammonia-lyase small subunit (270 aa).

Adenosylcob(III)alamin contacts are provided by Val-161, Glu-182, and Cys-211.

It belongs to the EutC family. The basic unit is a heterodimer which dimerizes to form tetramers. The heterotetramers trimerize; 6 large subunits form a core ring with 6 small subunits projecting outwards. Adenosylcob(III)alamin serves as cofactor.

It localises to the bacterial microcompartment. It catalyses the reaction ethanolamine = acetaldehyde + NH4(+). The protein operates within amine and polyamine degradation; ethanolamine degradation. Its function is as follows. Catalyzes the deamination of various vicinal amino-alcohols to oxo compounds. Allows this organism to utilize ethanolamine as the sole source of nitrogen and carbon in the presence of external vitamin B12. This chain is Ethanolamine ammonia-lyase small subunit, found in Azotobacter vinelandii (strain DJ / ATCC BAA-1303).